Reading from the N-terminus, the 130-residue chain is Large ribosomal subunit protein bL19 (130 aa).

The protein belongs to the bacterial ribosomal protein bL19 family.

Functionally, this protein is located at the 30S-50S ribosomal subunit interface and may play a role in the structure and function of the aminoacyl-tRNA binding site. This is Large ribosomal subunit protein bL19 from Mycoplasma capricolum subsp. capricolum (strain California kid / ATCC 27343 / NCTC 10154).